The primary structure comprises 187 residues: Tetraheme c-type cytochrome CymA (187 aa).

Over 1–12 the chain is Cytoplasmic; it reads MNWRALFKPSAK. A helical membrane pass occupies residues 13–33; sequence YSILALLVVGIVIGVVGYFAT. Over 34 to 187 the chain is Periplasmic; sequence QQTLHATSTD…KGVAHPYPKG (154 aa). Heme c is bound by residues cysteine 46, cysteine 49, histidine 64, cysteine 75, cysteine 78, histidine 79, aspartate 97, cysteine 136, cysteine 139, histidine 140, cysteine 173, cysteine 176, histidine 177, and histidine 182.

The protein belongs to the NapC/NirT/NrfH family. Homodimer. Heme c serves as cofactor.

It is found in the cell inner membrane. It catalyses the reaction a quinol + 2 Fe(III)-[cytochrome c](out) = a quinone + 2 Fe(II)-[cytochrome c](out) + 2 H(+)(out). Its activity is regulated as follows. Spectroscopic studies suggest that CymA requires a non-heme cofactor for quinol oxidation. Its function is as follows. Quinol dehydrogenase involved in several anaerobic electron transfer pathways. Acquires electrons from the membrane quinone pool and mediates their transfer to several periplasmic terminal reductases and redox shuttles, including the fumarate reductase FccA, the small tetraheme cytochrome (STC), the c-type cytochrome MtrA, the nitrate reductase NapA (either through NapB or directly), the nitrite reductase NrfA and probably also the DmsE subunit of dimethyl sulfoxide (DMSO) reductase. Required for growth on fumarate and on DMSO, and for the reduction of iron(III), manganese(IV), nitrite and nitrate. Not essential for growth on trimethylamine-N-oxide (TMAO). This chain is Tetraheme c-type cytochrome CymA, found in Shewanella oneidensis (strain ATCC 700550 / JCM 31522 / CIP 106686 / LMG 19005 / NCIMB 14063 / MR-1).